The primary structure comprises 151 residues: Sec-independent protein translocase protein TatB (151 aa).

The chain crosses the membrane as a helical span at residues 1 to 21 (MFDIGFLELLICGVIALLVLG). Composition is skewed to basic and acidic residues over residues 87–99 (KYEH…DQTR) and 122–132 (EPPHEPVRDEA). A disordered region spans residues 87-151 (KYEHMILPDD…SPTSPSDKYS (65 aa)). Low complexity predominate over residues 134–151 (ASDQPSDSSPTSPSDKYS).

This sequence belongs to the TatB family. As to quaternary structure, the Tat system comprises two distinct complexes: a TatABC complex, containing multiple copies of TatA, TatB and TatC subunits, and a separate TatA complex, containing only TatA subunits. Substrates initially bind to the TatABC complex, which probably triggers association of the separate TatA complex to form the active translocon.

Its subcellular location is the cell inner membrane. In terms of biological role, part of the twin-arginine translocation (Tat) system that transports large folded proteins containing a characteristic twin-arginine motif in their signal peptide across membranes. Together with TatC, TatB is part of a receptor directly interacting with Tat signal peptides. TatB may form an oligomeric binding site that transiently accommodates folded Tat precursor proteins before their translocation. The chain is Sec-independent protein translocase protein TatB from Marinobacter nauticus (strain ATCC 700491 / DSM 11845 / VT8) (Marinobacter aquaeolei).